The following is a 439-amino-acid chain: 3-phosphoshikimate 1-carboxyvinyltransferase (439 aa).

Positions 27, 28, and 32 each coordinate 3-phosphoshikimate. Residue Lys27 coordinates phosphoenolpyruvate. Phosphoenolpyruvate contacts are provided by Gly101 and Arg130. 3-phosphoshikimate contacts are provided by Ser175, Gln177, Asp326, and Lys353. Residue Gln177 participates in phosphoenolpyruvate binding. Catalysis depends on Asp326, which acts as the Proton acceptor. Phosphoenolpyruvate contacts are provided by Arg357 and Arg399.

The protein belongs to the EPSP synthase family. As to quaternary structure, monomer.

The protein localises to the cytoplasm. The catalysed reaction is 3-phosphoshikimate + phosphoenolpyruvate = 5-O-(1-carboxyvinyl)-3-phosphoshikimate + phosphate. The protein operates within metabolic intermediate biosynthesis; chorismate biosynthesis; chorismate from D-erythrose 4-phosphate and phosphoenolpyruvate: step 6/7. Catalyzes the transfer of the enolpyruvyl moiety of phosphoenolpyruvate (PEP) to the 5-hydroxyl of shikimate-3-phosphate (S3P) to produce enolpyruvyl shikimate-3-phosphate and inorganic phosphate. In Synechococcus sp. (strain CC9311), this protein is 3-phosphoshikimate 1-carboxyvinyltransferase.